Consider the following 601-residue polypeptide: Ubiquilin-4 (601 aa).

Residues 13 to 87 form the Ubiquitin-like domain; sequence IRVTVKTPKD…VHLVIKTPQK (75 aa). Residues Lys23 and Lys62 each participate in a glycyl lysine isopeptide (Lys-Gly) (interchain with G-Cter in SUMO2) cross-link. The interval 87 to 155 is disordered; sequence KAQDPAAATA…GAGEGSPSAT (69 aa). Residues 88 to 138 are compositionally biased toward low complexity; sequence AQDPAAATASSPSTPDPASAPSTTPASPATPAQPSTSGSASSDAGSGSRRS. 2 positions are modified to phosphoserine: Ser98 and Ser144. Over residues 139-149 the composition is skewed to gly residues; that stretch reads SGGGPSPGAGE. 2 STI1 domains span residues 192-229 and 230-261; these read NPEM…QQLM and ERNP…MQEM. Thr287 carries the phosphothreonine modification. Residues 301-366 are disordered; sequence FGNNPFSSLA…QVHPTVSNPF (66 aa). A compositionally biased stretch (low complexity) spans 307–318; the sequence is SSLAGNSDSSSS. Ser318 is modified (phosphoserine; by ATM). Positions 329–340 are enriched in pro residues; that stretch reads LPNPWSPSPPTS. Residues 344 to 354 are compositionally biased toward gly residues; the sequence is GSGGEGTGGSG. Residues 357–366 show a composition bias toward polar residues; the sequence is QVHPTVSNPF. STI1 domains follow at residues 393–440 and 444–476; these read NPQL…QEQL and LPVF…QQGL. Residues 490-533 form a disordered region; the sequence is LGSFGISRTPAPSAGSNAGSTPEAPTSSPATPATSSPTGASSAQ. A compositionally biased stretch (low complexity) spans 507–533; that stretch reads AGSTPEAPTSSPATPATSSPTGASSAQ. Residues 553–598 enclose the UBA domain; the sequence is QTPEVRFQQQLEQLNSMGFINREANLQALIATGGDINAAIERLLGS.

Homooligomer. Binds signal sequences of proteins that are targeted to the endoplasmic reticulum. Interacts (via UBA domain) with GJA1 (not ubiquitinated) and with ubiquitin; both compete for the same binding site. Interacts (via UBA domain) with ubiquitin and with polyubiquitin chains. Interacts (via ubiquitin-like domain) with PSMD2 and PSMD4, regulatory subunits of the 26S proteasome. Interacts with ATXN1/SCA1; interaction with ATXN1 inhibits polyubiquitination of UBQLN4 and interferes with PSMD4 binding. Interacts with HERPUD1. Interacts (via ubiquitin-like domain) with UBQLN1 (via UBA domain). Interacts with UBQLN2. Interacts (via STI1 1 and 2 domains) with MAP1LC3A/B/C. Interacts with BAG6. Interacts with MRE11 (when ubiquitinated); interaction with ubiquitinated MRE11 leads to MRE11 removal from chromatin. Interacts with DESI1/POST; leading to nuclear export. Interacts with BCL2A1 and BCL2L10. As to quaternary structure, (Microbial infection) Interacts with Mumps virus protein SH. Phosphorylated by ATM at Ser-318 in response to DNA damage, leading to localization in the nucleus and recruitment to sites of DNA damage. In terms of processing, ubiquitinated; this does not lead to proteasomal degradation. May undergo both 'Lys-48'- and 'Lys-63'-linked polyubiquitination. In terms of tissue distribution, highly expressed in pancreas, kidney, skeletal muscle, heart and throughout the brain, and at lower levels in placenta, lung and liver.

Its subcellular location is the nucleus. It is found in the cytoplasm. The protein resides in the chromosome. It localises to the endoplasmic reticulum. The protein localises to the perinuclear region. Its subcellular location is the cytoplasmic vesicle. It is found in the autophagosome. Regulator of protein degradation that mediates the proteasomal targeting of misfolded, mislocalized or accumulated proteins. Acts by binding polyubiquitin chains of target proteins via its UBA domain and by interacting with subunits of the proteasome via its ubiquitin-like domain. Key regulator of DNA repair that represses homologous recombination repair: in response to DNA damage, recruited to sites of DNA damage following phosphorylation by ATM and acts by binding and removing ubiquitinated MRE11 from damaged chromatin, leading to MRE11 degradation by the proteasome. MRE11 degradation prevents homologous recombination repair, redirecting double-strand break repair toward non-homologous end joining (NHEJ). Specifically recognizes and binds mislocalized transmembrane-containing proteins and targets them to proteasomal degradation. Collaborates with DESI1/POST in the export of ubiquitinated proteins from the nucleus to the cytoplasm. Also plays a role in the regulation of the proteasomal degradation of non-ubiquitinated GJA1. Acts as an adapter protein that recruits UBQLN1 to the autophagy machinery. Mediates the association of UBQLN1 with autophagosomes and the autophagy-related protein LC3 (MAP1LC3A/B/C) and may assist in the maturation of autophagosomes to autolysosomes by mediating autophagosome-lysosome fusion. The protein is Ubiquilin-4 of Homo sapiens (Human).